The primary structure comprises 461 residues: Acetylcholine receptor subunit alpha (461 aa).

Positions Met-1–Gly-24 are cleaved as a signal peptide. Over Ser-25 to Ile-234 the chain is Extracellular. Intrachain disulfides connect Cys-152-Cys-166 and Cys-216-Cys-217. A glycan (N-linked (GlcNAc...) asparagine) is linked at Asn-165. 3 consecutive transmembrane segments (helical) span residues Pro-235–Leu-259, Met-267–Val-285, and Tyr-301–Ile-320. The Cytoplasmic portion of the chain corresponds to Asn-321 to His-432. The helical transmembrane segment at Ile-433–Ala-451 threads the bilayer.

Belongs to the ligand-gated ion channel (TC 1.A.9) family. Acetylcholine receptor (TC 1.A.9.1) subfamily. Alpha-1/CHRNA1 sub-subfamily. As to quaternary structure, pentamer of two alpha chains, and one each of the beta, delta, and gamma chains.

It localises to the postsynaptic cell membrane. The protein localises to the cell membrane. The enzyme catalyses K(+)(in) = K(+)(out). The catalysed reaction is Na(+)(in) = Na(+)(out). Upon acetylcholine binding, the AChR responds by an extensive change in conformation that affects all subunits and leads to opening of an ion-conducting channel across the plasma membrane. The chain is Acetylcholine receptor subunit alpha (CHRNA1) from Torpedo marmorata (Marbled electric ray).